We begin with the raw amino-acid sequence, 548 residues long: Folylpolyglutamate synthase (548 aa).

G130 to S133 contacts ATP. Mg(2+) is bound by residues S157, E234, and H262. Positions 382 and 396 each coordinate ATP.

It belongs to the folylpolyglutamate synthase family. It depends on a monovalent cation as a cofactor.

The protein localises to the mitochondrion inner membrane. It localises to the mitochondrion matrix. The protein resides in the cytoplasm. It carries out the reaction (6S)-5,6,7,8-tetrahydrofolyl-(gamma-L-Glu)(n) + L-glutamate + ATP = (6S)-5,6,7,8-tetrahydrofolyl-(gamma-L-Glu)(n+1) + ADP + phosphate + H(+). It participates in cofactor biosynthesis; tetrahydrofolylpolyglutamate biosynthesis. In terms of biological role, catalyzes conversion of folates to polyglutamate derivatives allowing concentration of folate compounds in the cell and the intracellular retention of these cofactors, which are important substrates for most of the folate-dependent enzymes that are involved in one-carbon transfer reactions involved in purine, pyrimidine and amino acid synthesis. Required for methionine synthesis and maintenance of intact mitochondrial DNA. Involved in telomere maintenance. The chain is Folylpolyglutamate synthase from Saccharomyces cerevisiae (strain RM11-1a) (Baker's yeast).